A 198-amino-acid chain; its full sequence is Prostamide/prostaglandin F synthase (198 aa).

The residue at position 108 (Tyr108) is a Phosphotyrosine.

Belongs to the peroxiredoxin-like PRXL2 family. Prostamide/prostaglandin F synthase subfamily.

Its subcellular location is the cytoplasm. The protein localises to the cytosol. It catalyses the reaction prostaglandin H2 + [thioredoxin]-dithiol = prostaglandin F2alpha + [thioredoxin]-disulfide. The enzyme catalyses prostamide F2alpha + [thioredoxin]-disulfide = prostamide H2 + [thioredoxin]-dithiol. Catalyzes the reduction of prostaglandin-ethanolamide H(2) (prostamide H(2)) to prostamide F(2alpha) with NADPH as proton donor. Also able to reduce prostaglandin H(2) to prostaglandin F(2alpha). The chain is Prostamide/prostaglandin F synthase (PRXL2B) from Pongo abelii (Sumatran orangutan).